Consider the following 815-residue polypeptide: uncharacterized protein (815 aa).

Disordered regions lie at residues 123–183 (QSNT…QPST), 249–274 (NVNN…NNTN), 592–668 (IKQN…NLNS), and 765–815 (NNEE…EEIK). 2 stretches are compositionally biased toward polar residues: residues 135 to 154 (SIIT…TSTT) and 174 to 183 (DSITVLQPST). Over residues 595 to 611 (NGSSSSNNNSKLSSTNS) the composition is skewed to low complexity. The segment covering 612–639 (GQTSDNPINSSNGGQSIKKQGSNLSLNR) has biased composition (polar residues). The segment covering 640–668 (QQSSTKLNNQSNNNNNNNANTTNQNNLNS) has biased composition (low complexity). Over residues 765-782 (NNEEHNNNNKENNNENNK) the composition is skewed to basic and acidic residues. A compositionally biased stretch (low complexity) spans 783-809 (ENINNNNNIINNNNDNNCNENNNNCNE).

This is an uncharacterized protein from Dictyostelium discoideum (Social amoeba).